Consider the following 155-residue polypeptide: Transcriptional repressor NrdR (155 aa).

The segment at C3–C34 is a zinc-finger region. The region spanning P49–E139 is the ATP-cone domain.

It belongs to the NrdR family. Zn(2+) serves as cofactor.

Negatively regulates transcription of bacterial ribonucleotide reductase nrd genes and operons by binding to NrdR-boxes. This is Transcriptional repressor NrdR from Teredinibacter turnerae (strain ATCC 39867 / T7901).